Here is a 124-residue protein sequence, read N- to C-terminus: Glutaredoxin-2 (124 aa).

C13 and C16 are oxidised to a cystine.

The protein belongs to the glutaredoxin family. As to quaternary structure, homodimer.

It is found in the host cytoplasm. Its function is as follows. Glutaredoxin necessary for virion morphogenesis and virus replication. Functions as a thiol-disulfide transfer protein between membrane-associated OPG128 and substrates OPG095 or OPG053. The complete pathway for formation of disulfide bonds in intracellular virion membrane proteins sequentially involves oxidation of OPG072, OPG128 and OPG088. Exhibit thioltransferase and dehydroascorbate reductase activities in vitro. In Mus musculus (Mouse), this protein is Glutaredoxin-2 (OPG088).